A 96-amino-acid chain; its full sequence is ATP synthase subunit c (96 aa).

The next 2 helical transmembrane spans lie at 26–46 and 68–88; these read GLVL…CGIG and IMVT…YALV.

It belongs to the ATPase C chain family. As to quaternary structure, F-type ATPases have 2 components, F(1) - the catalytic core - and F(0) - the membrane proton channel. F(1) has five subunits: alpha(3), beta(3), gamma(1), delta(1), epsilon(1). F(0) has three main subunits: a(1), b(2) and c(10-14). The alpha and beta chains form an alternating ring which encloses part of the gamma chain. F(1) is attached to F(0) by a central stalk formed by the gamma and epsilon chains, while a peripheral stalk is formed by the delta and b chains.

The protein localises to the cell inner membrane. In terms of biological role, f(1)F(0) ATP synthase produces ATP from ADP in the presence of a proton or sodium gradient. F-type ATPases consist of two structural domains, F(1) containing the extramembraneous catalytic core and F(0) containing the membrane proton channel, linked together by a central stalk and a peripheral stalk. During catalysis, ATP synthesis in the catalytic domain of F(1) is coupled via a rotary mechanism of the central stalk subunits to proton translocation. Key component of the F(0) channel; it plays a direct role in translocation across the membrane. A homomeric c-ring of between 10-14 subunits forms the central stalk rotor element with the F(1) delta and epsilon subunits. The polypeptide is ATP synthase subunit c (Oleidesulfovibrio alaskensis (strain ATCC BAA-1058 / DSM 17464 / G20) (Desulfovibrio alaskensis)).